A 186-amino-acid polypeptide reads, in one-letter code: Biofilm operon icaADBC HTH-type negative transcriptional regulator IcaR (186 aa).

Residues 1–59 (MKDKIIDNAITLFSEKGYDGTTLDDIAKSVNIKKASLYYHFDSKKSIYEQSVKCCFDYL) form the HTH tetR-type domain. Positions 22–41 (TLDDIAKSVNIKKASLYYHF) form a DNA-binding region, H-T-H motif.

As to quaternary structure, homodimer.

Its function is as follows. Represses transcription of the icaADBC operon necessary for biofilm production. In Staphylococcus aureus (strain NCTC 8325 / PS 47), this protein is Biofilm operon icaADBC HTH-type negative transcriptional regulator IcaR (icaR).